The sequence spans 499 residues: Putative sodium-dependent excitatory amino acid transporter glt-4 (499 aa).

Topologically, residues 1-7 are cytoplasmic; the sequence is MAKLSKE. Helical transmembrane passes span 8–28, 50–70, and 87–107; these read NLLL…GFSL, FVQM…ITSL, and IYYT…VSVI. Asparagine 165 carries an N-linked (GlcNAc...) asparagine glycan. Helical transmembrane passes span 194–217, 227–254, and 276–297; these read VSDG…IGVI, FFKS…TFLI, and ITVI…CVVL. An intramembrane region (discontinuously helical) is located at residues 303–333; it reads IKFVGGMAQALLTALATSSSSATLPLSIKCC. An L-aspartate-binding site is contributed by 320–322; it reads SSS. A helical transmembrane segment spans residues 343–369; it reads VTRFVLPLGATINMDGTALYEAVAAIY. Residues glycine 351, threonine 353, and asparagine 355 each contribute to the Na(+) site. Residues threonine 359, 400–404, aspartate 433, and asparagine 440 each bind L-aspartate; that span reads IPQAG. An intramembrane region (discontinuously helical) is located at residues 383 to 416; that stretch reads VVLVSLTATLASIGAAGIPQAGIVTMIMVLIAIG. The helical transmembrane segment at 430–451 threads the bilayer; sequence FMLDRLRTTVNVHGDSIATAVI. Residues asparagine 440 and aspartate 444 each contribute to the Na(+) site.

This sequence belongs to the dicarboxylate/amino acid:cation symporter (DAACS) (TC 2.A.23) family.

Its subcellular location is the cell membrane. Its function is as follows. Sodium-dependent, high-affinity amino acid transporter that mediates the uptake of L-glutamate and also L-aspartate and D-aspartate. Functions as a symporter that transports one amino acid molecule together with two or three Na(+) ions and one proton, in parallel with the counter-transport of one K(+) ion. Mediates Cl(-) flux that is not coupled to amino acid transport; this avoids the accumulation of negative charges due to aspartate and Na(+) symport. The polypeptide is Putative sodium-dependent excitatory amino acid transporter glt-4 (glt-4) (Caenorhabditis elegans).